Reading from the N-terminus, the 376-residue chain is Queuine tRNA-ribosyltransferase (376 aa).

Catalysis depends on aspartate 89, which acts as the Proton acceptor. Substrate is bound by residues 89 to 93 (DSGGF), aspartate 143, glutamine 194, and glycine 221. An RNA binding region spans residues 252-258 (GVGTPSN). The active-site Nucleophile is aspartate 271. Residues 276–280 (ARNGR) are RNA binding; important for wobble base 34 recognition. Zn(2+) contacts are provided by cysteine 309, cysteine 311, cysteine 314, and histidine 340.

It belongs to the queuine tRNA-ribosyltransferase family. In terms of assembly, homodimer. Within each dimer, one monomer is responsible for RNA recognition and catalysis, while the other monomer binds to the replacement base PreQ1. Requires Zn(2+) as cofactor.

It carries out the reaction 7-aminomethyl-7-carbaguanine + guanosine(34) in tRNA = 7-aminomethyl-7-carbaguanosine(34) in tRNA + guanine. It functions in the pathway tRNA modification; tRNA-queuosine biosynthesis. Its function is as follows. Catalyzes the base-exchange of a guanine (G) residue with the queuine precursor 7-aminomethyl-7-deazaguanine (PreQ1) at position 34 (anticodon wobble position) in tRNAs with GU(N) anticodons (tRNA-Asp, -Asn, -His and -Tyr). Catalysis occurs through a double-displacement mechanism. The nucleophile active site attacks the C1' of nucleotide 34 to detach the guanine base from the RNA, forming a covalent enzyme-RNA intermediate. The proton acceptor active site deprotonates the incoming PreQ1, allowing a nucleophilic attack on the C1' of the ribose to form the product. After dissociation, two additional enzymatic reactions on the tRNA convert PreQ1 to queuine (Q), resulting in the hypermodified nucleoside queuosine (7-(((4,5-cis-dihydroxy-2-cyclopenten-1-yl)amino)methyl)-7-deazaguanosine). This Clostridium acetobutylicum (strain ATCC 824 / DSM 792 / JCM 1419 / IAM 19013 / LMG 5710 / NBRC 13948 / NRRL B-527 / VKM B-1787 / 2291 / W) protein is Queuine tRNA-ribosyltransferase.